The primary structure comprises 360 residues: 1-aminocyclopropane-1-carboxylate oxidase homolog 6 (360 aa).

Positions 208 to 309 (KGLLLLCHYY…ISVASFFSTS (102 aa)) constitute a Fe2OG dioxygenase domain. Positions 232, 234, and 288 each coordinate Fe cation. Arg-299 serves as a coordination point for 2-oxoglutarate.

Belongs to the iron/ascorbate-dependent oxidoreductase family. Requires Fe(2+) as cofactor. In terms of tissue distribution, constitutively expressed in leaves and blades.

In Arabidopsis thaliana (Mouse-ear cress), this protein is 1-aminocyclopropane-1-carboxylate oxidase homolog 6.